Consider the following 665-residue polypeptide: Protein-arginine deiminase type-2 (665 aa).

Ca(2+)-binding residues include Asp123, Asp125, Asp127, Glu131, Asn154, Asp156, Asp158, Asp166, Asp169, Lys171, Asp177, Asp180, Glu354, Asp389, Phe408, Leu411, and Glu412. The Nucleophile role is filled by Cys647.

This sequence belongs to the protein arginine deiminase family. In terms of assembly, homodimer. Requires Ca(2+) as cofactor. Spinal cord, submaxillary gland, cerebrum, cerebellum, and skeletal muscle.

The protein resides in the cytoplasm. It carries out the reaction L-arginyl-[protein] + H2O = L-citrullyl-[protein] + NH4(+). Catalyzes the deimination of arginine residues of proteins. This chain is Protein-arginine deiminase type-2 (Padi2), found in Rattus norvegicus (Rat).